The chain runs to 317 residues: Glycine--tRNA ligase alpha subunit (317 aa).

This sequence belongs to the class-II aminoacyl-tRNA synthetase family. In terms of assembly, tetramer of two alpha and two beta subunits.

The protein resides in the cytoplasm. The catalysed reaction is tRNA(Gly) + glycine + ATP = glycyl-tRNA(Gly) + AMP + diphosphate. The chain is Glycine--tRNA ligase alpha subunit from Pseudomonas fluorescens (strain ATCC BAA-477 / NRRL B-23932 / Pf-5).